The primary structure comprises 126 residues: Aspartate 1-decarboxylase (126 aa).

Catalysis depends on Ser25, which acts as the Schiff-base intermediate with substrate; via pyruvic acid. Ser25 is modified (pyruvic acid (Ser)). Position 57 (Thr57) interacts with substrate. Residue Tyr58 is the Proton donor of the active site. 73-75 (GAA) contributes to the substrate binding site.

Belongs to the PanD family. Heterooctamer of four alpha and four beta subunits. It depends on pyruvate as a cofactor. Is synthesized initially as an inactive proenzyme, which is activated by self-cleavage at a specific serine bond to produce a beta-subunit with a hydroxyl group at its C-terminus and an alpha-subunit with a pyruvoyl group at its N-terminus.

Its subcellular location is the cytoplasm. It carries out the reaction L-aspartate + H(+) = beta-alanine + CO2. Its pathway is cofactor biosynthesis; (R)-pantothenate biosynthesis; beta-alanine from L-aspartate: step 1/1. Catalyzes the pyruvoyl-dependent decarboxylation of aspartate to produce beta-alanine. The polypeptide is Aspartate 1-decarboxylase (Azotobacter vinelandii (strain DJ / ATCC BAA-1303)).